The following is a 106-amino-acid chain: Small ribosomal subunit protein bS20 (106 aa).

A disordered region spans residues 1–32 (MAQKKPKRNLSALKRHRQSLKRRLRNKAKKSA).

Part of the 30S ribosomal subunit.

One of the primary rRNA binding proteins, it binds directly to 16S rRNA where it nucleates assembly of the bottom of the body of the 30S subunit, by binding to several RNA helices of the 16S rRNA. This is Small ribosomal subunit protein bS20 (rpsT) from Thermus thermophilus (strain ATCC 27634 / DSM 579 / HB8).